A 370-amino-acid polypeptide reads, in one-letter code: Phosphoserine aminotransferase (370 aa).

Methionine 1 is subject to N-acetylmethionine. Residues histidine 44 and arginine 45 each contribute to the O-phospho-L-serine site. Lysine 51 is modified (N6-acetyllysine). Residues glycine 79 and tryptophan 107 each coordinate pyridoxal 5'-phosphate. The residue at position 127 (lysine 127) is an N6-acetyllysine. Pyridoxal 5'-phosphate is bound by residues threonine 156, aspartate 176, and glutamine 199. Lysine 200 bears the N6-(pyridoxal phosphate)lysine mark. Residues asparagine 241 and threonine 242 each coordinate pyridoxal 5'-phosphate. N6-acetyllysine is present on residues lysine 269, lysine 318, and lysine 323. Residue serine 331 is modified to Phosphoserine. At lysine 333 the chain carries N6-acetyllysine. The O-phospho-L-serine site is built by histidine 335, arginine 336, and arginine 342.

This sequence belongs to the class-V pyridoxal-phosphate-dependent aminotransferase family. SerC subfamily. Homodimer. It depends on pyridoxal 5'-phosphate as a cofactor.

The enzyme catalyses O-phospho-L-serine + 2-oxoglutarate = 3-phosphooxypyruvate + L-glutamate. It functions in the pathway amino-acid biosynthesis; L-serine biosynthesis; L-serine from 3-phospho-D-glycerate: step 2/3. In terms of biological role, involved in L-serine biosynthesis via the phosphorylated pathway, a three-step pathway converting the glycolytic intermediate 3-phospho-D-glycerate into L-serine. Catalyzes the second step, that is the pyridoxal 5'-phosphate-dependent transamination of 3-phosphohydroxypyruvate and L-glutamate to O-phosphoserine (OPS) and alpha-ketoglutarate. The sequence is that of Phosphoserine aminotransferase from Mus musculus (Mouse).